Consider the following 362-residue polypeptide: MKLHCCLFTLVASIIVPAAFVLEDVDFNQMVSLEANRSSYNASFPSSFELSASSHSDDDVIIAKEGTSVSIECLLTASHYEDVHWHNSKGQQLDGRGRGGKWLVSDNFLNITNVAFDDRGLYTCFVTSPIRASYSVTLRVIFTSGDMSVYYMIVCLIAFTITLILNVTRLCMMSSHLRKTEKAINEFFRTEGAEKLQKAFEIAKRIPIITSAKTLELAKVTQFKTMEFARYIEELARSVPLPPLILNCRAFVEEMFEAVRVDDPDDLGERIKERPALNAQGGIYVINPEMGRSNSPGGDSDDGSLNEQGQEIAVQVSVHLQSETKSIDTESQGSSHFSPPDDTGSAESNCNYKDGAYENSQL.

The signal sequence occupies residues 1-19 (MKLHCCLFTLVASIIVPAA). Over 20-146 (FVLEDVDFNQ…TLRVIFTSGD (127 aa)) the chain is Extracellular. 3 N-linked (GlcNAc...) asparagine glycosylation sites follow: asparagine 36, asparagine 41, and asparagine 110. Positions 45–137 (PSSFELSASS…SPIRASYSVT (93 aa)) constitute an Ig-like C2-type domain. A disulfide bond links cysteine 73 and cysteine 124. Residues 147 to 167 (MSVYYMIVCLIAFTITLILNV) traverse the membrane as a helical segment. Residues 168 to 362 (TRLCMMSSHL…KDGAYENSQL (195 aa)) are Cytoplasmic-facing. 2 disordered regions span residues 282–306 (GIYV…GSLN) and 319–362 (HLQS…NSQL). Residues 319–337 (HLQSETKSIDTESQGSSHF) are compositionally biased toward polar residues.

Glycosylated.

The protein localises to the cell membrane. In terms of biological role, component of the elastin-associated microfibrils. The sequence is that of Microfibril-associated glycoprotein 3 (MFAP3) from Pongo abelii (Sumatran orangutan).